Reading from the N-terminus, the 435-residue chain is Gamma-glutamyl phosphate reductase (435 aa).

It belongs to the gamma-glutamyl phosphate reductase family.

The protein resides in the cytoplasm. It catalyses the reaction L-glutamate 5-semialdehyde + phosphate + NADP(+) = L-glutamyl 5-phosphate + NADPH + H(+). The protein operates within amino-acid biosynthesis; L-proline biosynthesis; L-glutamate 5-semialdehyde from L-glutamate: step 2/2. Functionally, catalyzes the NADPH-dependent reduction of L-glutamate 5-phosphate into L-glutamate 5-semialdehyde and phosphate. The product spontaneously undergoes cyclization to form 1-pyrroline-5-carboxylate. This Xylella fastidiosa (strain M12) protein is Gamma-glutamyl phosphate reductase.